The chain runs to 297 residues: Light-independent protochlorophyllide reductase iron-sulfur ATP-binding protein (297 aa).

ATP is bound by residues 41-46 (GIGKST) and lysine 70. Serine 45 is a binding site for Mg(2+). Cysteine 126 and cysteine 160 together coordinate [4Fe-4S] cluster. ATP is bound by residues 211–212 (NR) and 235–237 (PDL).

This sequence belongs to the NifH/BchL/ChlL family. As to quaternary structure, homodimer. Protochlorophyllide reductase is composed of three subunits; BchL, BchN and BchB. It depends on [4Fe-4S] cluster as a cofactor.

It carries out the reaction chlorophyllide a + oxidized 2[4Fe-4S]-[ferredoxin] + 2 ADP + 2 phosphate = protochlorophyllide a + reduced 2[4Fe-4S]-[ferredoxin] + 2 ATP + 2 H2O. It functions in the pathway porphyrin-containing compound metabolism; bacteriochlorophyll biosynthesis (light-independent). Component of the dark-operative protochlorophyllide reductase (DPOR) that uses Mg-ATP and reduced ferredoxin to reduce ring D of protochlorophyllide (Pchlide) to form chlorophyllide a (Chlide). This reaction is light-independent. The L component serves as a unique electron donor to the NB-component of the complex, and binds Mg-ATP. The polypeptide is Light-independent protochlorophyllide reductase iron-sulfur ATP-binding protein (Methylobacterium radiotolerans (strain ATCC 27329 / DSM 1819 / JCM 2831 / NBRC 15690 / NCIMB 10815 / 0-1)).